We begin with the raw amino-acid sequence, 329 residues long: Beta-ketoacyl-[acyl-carrier-protein] synthase III (329 aa).

Catalysis depends on residues Cys113 and His256. Residues 257-261 (QANQR) form an ACP-binding region. Asn286 is an active-site residue.

Belongs to the thiolase-like superfamily. FabH family. Homodimer.

Its subcellular location is the cytoplasm. The enzyme catalyses malonyl-[ACP] + acetyl-CoA + H(+) = 3-oxobutanoyl-[ACP] + CO2 + CoA. It participates in lipid metabolism; fatty acid biosynthesis. Its function is as follows. Catalyzes the condensation reaction of fatty acid synthesis by the addition to an acyl acceptor of two carbons from malonyl-ACP. Catalyzes the first condensation reaction which initiates fatty acid synthesis and may therefore play a role in governing the total rate of fatty acid production. Possesses both acetoacetyl-ACP synthase and acetyl transacylase activities. Its substrate specificity determines the biosynthesis of branched-chain and/or straight-chain of fatty acids. This chain is Beta-ketoacyl-[acyl-carrier-protein] synthase III, found in Natranaerobius thermophilus (strain ATCC BAA-1301 / DSM 18059 / JW/NM-WN-LF).